The sequence spans 334 residues: Anthranilate phosphoribosyltransferase (334 aa).

Residues glycine 79, 82 to 83 (GD), serine 87, 89 to 92 (NIST), 107 to 115 (KAGNRSISS), and serine 119 contribute to the 5-phospho-alpha-D-ribose 1-diphosphate site. Residue glycine 79 coordinates anthranilate. Serine 91 is a binding site for Mg(2+). Residue asparagine 110 coordinates anthranilate. Arginine 165 is an anthranilate binding site. The Mg(2+) site is built by aspartate 224 and glutamate 225.

Belongs to the anthranilate phosphoribosyltransferase family. In terms of assembly, homodimer. The cofactor is Mg(2+).

The enzyme catalyses N-(5-phospho-beta-D-ribosyl)anthranilate + diphosphate = 5-phospho-alpha-D-ribose 1-diphosphate + anthranilate. The protein operates within amino-acid biosynthesis; L-tryptophan biosynthesis; L-tryptophan from chorismate: step 2/5. In terms of biological role, catalyzes the transfer of the phosphoribosyl group of 5-phosphorylribose-1-pyrophosphate (PRPP) to anthranilate to yield N-(5'-phosphoribosyl)-anthranilate (PRA). In Streptococcus thermophilus (strain ATCC BAA-491 / LMD-9), this protein is Anthranilate phosphoribosyltransferase.